The primary structure comprises 94 residues: Small ribosomal subunit protein uS17 (94 aa).

A disordered region spans residues 1–22 (MASSSTEGQAAARGRKKSWTGK).

Belongs to the universal ribosomal protein uS17 family. As to quaternary structure, part of the 30S ribosomal subunit.

In terms of biological role, one of the primary rRNA binding proteins, it binds specifically to the 5'-end of 16S ribosomal RNA. This Chlorobium luteolum (strain DSM 273 / BCRC 81028 / 2530) (Pelodictyon luteolum) protein is Small ribosomal subunit protein uS17.